We begin with the raw amino-acid sequence, 342 residues long: MVSVKKIVASALVGVLMFSAVGCNMVEKTQAAIDKTTVATVNGEKITLGEVDSHLKGVFAQMKSQYGDKYMDDPQVAQQILQQRQSVVQGLVTDKVLGIEADKLGIKPSEEEIKKKVDEQFENIKKGMGDNFDKALEAEGYTEDTFKDVIKNQVINQAVQDYIIKDVKVTDEDAQKYYDENKQQFVAKDSGVLTKHLLFENEEEAQKAYDEIQSGKTTFNDLFTKYQNNKSENKKPIAENLGVVPAENSGLVQEFVDGLKPLKEGEISKPIKTQFGYHIIQAGATYEKGAQLPFDEVKSQIIQILKQQKDSEKFKADMDQWKKDLNVKVYDDKLQEGLKISK.

The N-terminal stretch at 1-22 is a signal peptide; the sequence is MVSVKKIVASALVGVLMFSAVG. A lipid anchor (N-palmitoyl cysteine) is attached at C23. The S-diacylglycerol cysteine moiety is linked to residue C23. One can recognise a PpiC domain in the interval 189–284; sequence DSGVLTKHLL…FGYHIIQAGA (96 aa).

Belongs to the PrsA family.

It is found in the cell membrane. The enzyme catalyses [protein]-peptidylproline (omega=180) = [protein]-peptidylproline (omega=0). Its function is as follows. Plays a major role in protein secretion by helping the post-translocational extracellular folding of several secreted proteins. The protein is Foldase protein PrsA of Clostridium perfringens (strain 13 / Type A).